The sequence spans 505 residues: RNA-splicing ligase RtcB homolog (505 aa).

Residues Asp-119, Cys-122, His-227, and His-259 each coordinate Mn(2+). Position 226 to 230 (226 to 230) interacts with GMP; the sequence is NHYAE. At Ser-300 the chain carries Phosphoserine. His-353 serves as a coordination point for Mn(2+). GMP-binding positions include 353–354, 402–405, Ser-409, and 428–431; these read HN, GGTM, and HGAG. Catalysis depends on His-428, which acts as the GMP-histidine intermediate. Residue Lys-496 forms a Glycyl lysine isopeptide (Lys-Gly) (interchain with G-Cter in SUMO2) linkage. A GMP-binding site is contributed by Lys-504.

It belongs to the RtcB family. In terms of assembly, catalytic component of the tRNA-splicing ligase complex. It depends on Mn(2+) as a cofactor.

It localises to the nucleus. It is found in the cytoplasm. It catalyses the reaction a 3'-end 3'-phospho-ribonucleotide-RNA + a 5'-end dephospho-ribonucleoside-RNA + GTP = a ribonucleotidyl-ribonucleotide-RNA + GMP + diphosphate. The enzyme catalyses a 3'-end 2',3'-cyclophospho-ribonucleotide-RNA + a 5'-end dephospho-ribonucleoside-RNA + GTP + H2O = a ribonucleotidyl-ribonucleotide-RNA + GMP + diphosphate + H(+). Its function is as follows. Catalytic subunit of the tRNA-splicing ligase complex that acts by directly joining spliced tRNA halves to mature-sized tRNAs by incorporating the precursor-derived splice junction phosphate into the mature tRNA as a canonical 3',5'-phosphodiester. May act as an RNA ligase with broad substrate specificity, and may function toward other RNAs. The sequence is that of RNA-splicing ligase RtcB homolog from Bos taurus (Bovine).